Consider the following 132-residue polypeptide: Small ribosomal subunit protein uS8 (132 aa).

This sequence belongs to the universal ribosomal protein uS8 family. Part of the 30S ribosomal subunit. Contacts proteins S5 and S12.

In terms of biological role, one of the primary rRNA binding proteins, it binds directly to 16S rRNA central domain where it helps coordinate assembly of the platform of the 30S subunit. This is Small ribosomal subunit protein uS8 from Clostridium acetobutylicum (strain ATCC 824 / DSM 792 / JCM 1419 / IAM 19013 / LMG 5710 / NBRC 13948 / NRRL B-527 / VKM B-1787 / 2291 / W).